The primary structure comprises 145 residues: D-aminoacyl-tRNA deacylase (145 aa).

Positions 137-138 (GP) match the Gly-cisPro motif, important for rejection of L-amino acids motif.

This sequence belongs to the DTD family. Homodimer.

It localises to the cytoplasm. It catalyses the reaction glycyl-tRNA(Ala) + H2O = tRNA(Ala) + glycine + H(+). It carries out the reaction a D-aminoacyl-tRNA + H2O = a tRNA + a D-alpha-amino acid + H(+). An aminoacyl-tRNA editing enzyme that deacylates mischarged D-aminoacyl-tRNAs. Also deacylates mischarged glycyl-tRNA(Ala), protecting cells against glycine mischarging by AlaRS. Acts via tRNA-based rather than protein-based catalysis; rejects L-amino acids rather than detecting D-amino acids in the active site. By recycling D-aminoacyl-tRNA to D-amino acids and free tRNA molecules, this enzyme counteracts the toxicity associated with the formation of D-aminoacyl-tRNA entities in vivo and helps enforce protein L-homochirality. This Yersinia enterocolitica serotype O:8 / biotype 1B (strain NCTC 13174 / 8081) protein is D-aminoacyl-tRNA deacylase.